We begin with the raw amino-acid sequence, 296 residues long: Giardin subunit alpha-2 (296 aa).

4 Annexin repeats span residues 2–71 (PKLS…MDLF), 73–143 (DRHE…MEKW), 153–223 (GSPD…AHFA), and 226–293 (GMHK…TLWR).

This sequence belongs to the annexin family. Giardin subunit alpha subfamily.

It is found in the cytoplasm. The protein localises to the cytoskeleton. Giardins are involved in parasite attachment to the intestinal mucosa and in the cytoskeletal disassembly and reassembly that marks the transition from infectious trophozoite to transmissible cyst. They may interact with other cytoskeletal proteins such as microtubules in the microribbons or crossbridges, to maintain the integrity of the ventral disk. The chain is Giardin subunit alpha-2 from Giardia intestinalis (Giardia lamblia).